A 221-amino-acid polypeptide reads, in one-letter code: Penicillin-binding protein activator LpoB (221 aa).

Residues 1 to 20 (MLNRMYRYALLATVALALSG) form the signal peptide. C21 carries N-palmitoyl cysteine lipidation. A lipid anchor (S-diacylglycerol cysteine) is attached at C21. Positions 29 to 82 (PAPVEEAQPGTQQPTQPVPPPTQPVPTVPSVPSIPAQPGPIEHQPENATPEPKA) are disordered. Over residues 44–57 (QPVPPPTQPVPTVP) the composition is skewed to pro residues.

It belongs to the LpoB family. Interacts with PBP1b.

It localises to the cell outer membrane. Functionally, regulator of peptidoglycan synthesis that is essential for the function of penicillin-binding protein 1B (PBP1b). The sequence is that of Penicillin-binding protein activator LpoB from Cronobacter turicensis (strain DSM 18703 / CCUG 55852 / LMG 23827 / z3032).